The sequence spans 105 residues: Small ribosomal subunit protein uS10 (105 aa).

The protein belongs to the universal ribosomal protein uS10 family. In terms of assembly, part of the 30S ribosomal subunit.

Its function is as follows. Involved in the binding of tRNA to the ribosomes. In Thermus thermophilus (strain ATCC BAA-163 / DSM 7039 / HB27), this protein is Small ribosomal subunit protein uS10.